A 240-amino-acid chain; its full sequence is Ribosomal RNA small subunit methyltransferase I (240 aa).

Belongs to the methyltransferase superfamily. RsmI family.

The protein localises to the cytoplasm. The enzyme catalyses cytidine(1402) in 16S rRNA + S-adenosyl-L-methionine = 2'-O-methylcytidine(1402) in 16S rRNA + S-adenosyl-L-homocysteine + H(+). Catalyzes the 2'-O-methylation of the ribose of cytidine 1402 (C1402) in 16S rRNA. The chain is Ribosomal RNA small subunit methyltransferase I from Leptospira biflexa serovar Patoc (strain Patoc 1 / ATCC 23582 / Paris).